Consider the following 166-residue polypeptide: Small ribosomal subunit protein uS9 (166 aa).

Residues 135–166 (KKAGFLTRDPRATERKKYGLKKARKAPQYSKR) form a disordered region. The segment covering 142-151 (RDPRATERKK) has biased composition (basic and acidic residues). Residues 152-166 (YGLKKARKAPQYSKR) are compositionally biased toward basic residues.

This sequence belongs to the universal ribosomal protein uS9 family.

The polypeptide is Small ribosomal subunit protein uS9 (Mycolicibacterium paratuberculosis (strain ATCC BAA-968 / K-10) (Mycobacterium paratuberculosis)).